A 177-amino-acid polypeptide reads, in one-letter code: ATP synthase subunit delta (177 aa).

This sequence belongs to the ATPase delta chain family. F-type ATPases have 2 components, F(1) - the catalytic core - and F(0) - the membrane proton channel. F(1) has five subunits: alpha(3), beta(3), gamma(1), delta(1), epsilon(1). F(0) has three main subunits: a(1), b(2) and c(10-14). The alpha and beta chains form an alternating ring which encloses part of the gamma chain. F(1) is attached to F(0) by a central stalk formed by the gamma and epsilon chains, while a peripheral stalk is formed by the delta and b chains.

The protein localises to the cell inner membrane. In terms of biological role, f(1)F(0) ATP synthase produces ATP from ADP in the presence of a proton or sodium gradient. F-type ATPases consist of two structural domains, F(1) containing the extramembraneous catalytic core and F(0) containing the membrane proton channel, linked together by a central stalk and a peripheral stalk. During catalysis, ATP synthesis in the catalytic domain of F(1) is coupled via a rotary mechanism of the central stalk subunits to proton translocation. Its function is as follows. This protein is part of the stalk that links CF(0) to CF(1). It either transmits conformational changes from CF(0) to CF(1) or is implicated in proton conduction. The sequence is that of ATP synthase subunit delta from Pseudoalteromonas translucida (strain TAC 125).